The primary structure comprises 220 residues: MPLFQKAVFLTTVANLRDLPQDSVREVAFAGRSNAGKSSAINTLAGRVRLAFVSKTPGRTQHLNYFTLDEGKYFVDLPGYGYAKAPEAIRSQWEGLIGPYLSKRDQLAGLVVIMDIRRPMTDLDLRLIDWFRPTGRPIHILLSKSDKLSRQDQTKALRSVKAEVATWGDADLYSVQLFSSLKKAGVEEAERVLASWLDIEIKQKENKGPPDKGSPGAKMP.

The EngB-type G domain occupies 23-199; that stretch reads SVREVAFAGR…ERVLASWLDI (177 aa). Mg(2+) is bound by residues serine 38 and threonine 60.

It belongs to the TRAFAC class TrmE-Era-EngA-EngB-Septin-like GTPase superfamily. EngB GTPase family. Mg(2+) is required as a cofactor.

Its function is as follows. Necessary for normal cell division and for the maintenance of normal septation. This Dechloromonas aromatica (strain RCB) protein is Probable GTP-binding protein EngB.